The sequence spans 209 residues: Ion-translocating oxidoreductase complex subunit G (209 aa).

The Cytoplasmic portion of the chain corresponds to 1–8; it reads MLTAIRKN. A helical membrane pass occupies residues 9–29; sequence GLILAVFACVSTGLVALTYAL. At 30–209 the chain is on the periplasmic side; the sequence is TAEQIQQQEQ…HNQPNPCEGQ (180 aa). Thr-175 carries the post-translational modification FMN phosphoryl threonine.

It belongs to the RnfG family. The complex is composed of six subunits: RnfA, RnfB, RnfC, RnfD, RnfE and RnfG. Requires FMN as cofactor.

It is found in the cell inner membrane. Its function is as follows. Part of a membrane-bound complex that couples electron transfer with translocation of ions across the membrane. The sequence is that of Ion-translocating oxidoreductase complex subunit G from Vibrio cholerae serotype O1 (strain ATCC 39541 / Classical Ogawa 395 / O395).